The chain runs to 105 residues: Diuretic hormone class 2 (105 aa).

The N-terminal stretch at 1–23 (MTVLCTLMAFVMVVAISSLTVDA) is a signal peptide. A propeptide spanning residues 24-63 (IPHSHESYWDQQDDIDRDEFLELLSRLSRTVMNRPEMENS) is cleaved from the precursor. Pro-96 bears the Proline amide mark. Residues 101–105 (RSEQA) constitute a propeptide that is removed on maturation.

In terms of tissue distribution, expressed in central brain, antennal lobes, retrocerebral complex and gnathal, thoracic and abdominal ganglia but not in optical lobes (at protein level).

The protein resides in the secreted. Its function is as follows. Regulation of fluid secretion. Stimulates Malpighian tubules fluid secretion. The sequence is that of Diuretic hormone class 2 from Camponotus floridanus (Florida carpenter ant).